Consider the following 789-residue polypeptide: Probable phosphoketolase 1 (789 aa).

The protein belongs to the XFP family. The cofactor is thiamine diphosphate.

This Rhizobium meliloti (strain 1021) (Ensifer meliloti) protein is Probable phosphoketolase 1.